The following is a 107-amino-acid chain: Nucleoid-associated protein Pnuc_0701 (107 aa).

The protein belongs to the YbaB/EbfC family. In terms of assembly, homodimer.

The protein localises to the cytoplasm. It is found in the nucleoid. In terms of biological role, binds to DNA and alters its conformation. May be involved in regulation of gene expression, nucleoid organization and DNA protection. This chain is Nucleoid-associated protein Pnuc_0701, found in Polynucleobacter asymbioticus (strain DSM 18221 / CIP 109841 / QLW-P1DMWA-1) (Polynucleobacter necessarius subsp. asymbioticus).